Consider the following 211-residue polypeptide: Molybdenum cofactor guanylyltransferase (211 aa).

Residues 12 to 14 (LAG), Lys-25, Asn-53, Asp-71, and Asp-101 each bind GTP. Residue Asp-101 coordinates Mg(2+).

Belongs to the MobA family. Monomer. Mg(2+) is required as a cofactor.

The protein resides in the cytoplasm. It catalyses the reaction Mo-molybdopterin + GTP + H(+) = Mo-molybdopterin guanine dinucleotide + diphosphate. In terms of biological role, transfers a GMP moiety from GTP to Mo-molybdopterin (Mo-MPT) cofactor (Moco or molybdenum cofactor) to form Mo-molybdopterin guanine dinucleotide (Mo-MGD) cofactor. The polypeptide is Molybdenum cofactor guanylyltransferase (Acidovorax sp. (strain JS42)).